The sequence spans 343 residues: Versiconal hemiacetal acetate reductase (343 aa).

Tyr59 serves as the catalytic Proton donor. His144 lines the substrate pocket. 229–239 (SPVARGALARP) serves as a coordination point for NADP(+).

Belongs to the aldo/keto reductase family. Aldo/keto reductase 2 subfamily.

It carries out the reaction (2S)-versicolorone + NADP(+) = 1'-hydroxyversicolorone + NADPH + H(+). The catalysed reaction is (3S)-versiconol acetate + NADP(+) = (2S,3S)-versiconal hemiacetal acetate + NADPH + H(+). It catalyses the reaction (S)-versiconol + NADP(+) = (2S-3S)-versiconal hemiacetal + NADPH + H(+). Catalyzes 3 reactions: from hydroxyversicolorone (HVN) to versicolorone (VONE), from versiconal hemiacetal acetate (VHA) to versiconol acetate (VOAc) and from versiconal (VHOH) to versiconol (VOH). Probably not an aflatoxin biosynthesis gene: may be involved in the vertical branching steps connecting the main pathway from HVN to VHOH with the side pathway from VONE to VOH. The sequence is that of Versiconal hemiacetal acetate reductase (vrdA) from Aspergillus parasiticus.